Reading from the N-terminus, the 157-residue chain is uncharacterized protein (157 aa).

The N-acetyltransferase domain maps to 9–146; the sequence is LLINYKTLDE…GDFYVWHPET (138 aa).

This is an uncharacterized protein from Bacillus cereus (strain ATCC 10987 / NRS 248).